Reading from the N-terminus, the 341-residue chain is Processive diacylglycerol beta-glycosyltransferase (341 aa).

The protein belongs to the glycosyltransferase 2 family. Requires Mg(2+) as cofactor.

It localises to the cell membrane. The catalysed reaction is a 1,2-diacyl-sn-glycerol + UDP-alpha-D-glucose = a 1,2-diacyl-3-O-(beta-D-glucopyranosyl)-sn-glycerol + UDP + H(+). It catalyses the reaction a 1,2-diacyl-sn-glycerol + UDP-alpha-D-galactose = a 1,2-diacyl-3-O-(beta-D-galactosyl)-sn-glycerol + UDP + H(+). It carries out the reaction a 1,2-diacyl-3-O-(beta-D-galactosyl)-sn-glycerol + UDP-alpha-D-glucose = a 1,2-diacyl-3-O-[beta-D-glucopyranosyl-(1-&gt;6)-beta-D-galactopyranosyl]-sn-glycerol + UDP + H(+). The enzyme catalyses a 1,2-diacyl-3-O-(beta-D-galactosyl)-sn-glycerol + UDP-alpha-D-galactose = a 1,2-diacyl-3-O-[beta-D-galactosyl-(1-&gt;6)-beta-D-galactosyl]-sn-glycerol + UDP + H(+). Activated by the negatively charged lipid phosphatidylglycerol (PG). In terms of biological role, processive glycosyltransferase involved in the biosynthesis of both the non-bilayer-prone beta-monoglycosyldiacylglycerol and the bilayer-forming membrane lipid glucosyl-galactosyldiacylglycerol and digalactosyl-diacylglycerol. These components contribute to regulate the properties and stability of the membrane. Catalyzes sequentially the transfers of glucosyl or galactosyl residues from UDP-Glc or UDP-Gal to diacylglycerol (DAG) acceptor to form the corresponding beta-glycosyl-DAG (3-O-(beta-D-glycopyranosyl)-1,2-diacyl-sn-glycerol). Then, only beta-galactosyl-DAG (3-O-(beta-D-galactopyranosyl)-1,2-diacyl-sn-glycerol) can act as acceptor to give the beta-glycosyl-beta-galactosyl-DAG product (3-O-(beta-D-glycopyranosyl-(1-&gt;6)-D-galactopyranosyl)-1,2-diacyl-sn-glycerol). It can also use alpha-Gal-beta-Gal-DAG, ceramide (Cer) and beta-Gal-Cer as sugar acceptors. The enzyme is supposed to be mainly a galactosyltransferase, with higher glycosyltransferase activity for the addition of the second glycosyl on beta-Gal-DAG as acceptor. The main glycolipid produced in vivo is beta-Glc-beta-Gal-DAG with a beta-1,6 linkage. In Mycoplasma pneumoniae (strain ATCC 29342 / M129 / Subtype 1) (Mycoplasmoides pneumoniae), this protein is Processive diacylglycerol beta-glycosyltransferase.